Reading from the N-terminus, the 209-residue chain is High frequency lysogenization protein HflD homolog (209 aa).

It belongs to the HflD family.

The protein resides in the cytoplasm. The protein localises to the cell inner membrane. The chain is High frequency lysogenization protein HflD homolog from Sodalis glossinidius (strain morsitans).